The sequence spans 379 residues: Cytochrome b (379 aa).

Helical transmembrane passes span 33-53 (FGSL…FLAM), 77-98 (WLIR…FIHV), 113-133 (WNIG…GYVL), and 178-198 (FFAF…VHLL). Heme b-binding residues include histidine 83 and histidine 97. Heme b-binding residues include histidine 182 and histidine 196. An a ubiquinone-binding site is contributed by histidine 201. 4 consecutive transmembrane segments (helical) span residues 226–246 (TKDL…ALFF), 288–308 (LGGV…PLLN), 320–340 (VTQV…WIGG), and 347–367 (FTTI…ILIP).

Belongs to the cytochrome b family. As to quaternary structure, the cytochrome bc1 complex contains 11 subunits: 3 respiratory subunits (MT-CYB, CYC1 and UQCRFS1), 2 core proteins (UQCRC1 and UQCRC2) and 6 low-molecular weight proteins (UQCRH/QCR6, UQCRB/QCR7, UQCRQ/QCR8, UQCR10/QCR9, UQCR11/QCR10 and a cleavage product of UQCRFS1). This cytochrome bc1 complex then forms a dimer. It depends on heme b as a cofactor.

Its subcellular location is the mitochondrion inner membrane. Component of the ubiquinol-cytochrome c reductase complex (complex III or cytochrome b-c1 complex) that is part of the mitochondrial respiratory chain. The b-c1 complex mediates electron transfer from ubiquinol to cytochrome c. Contributes to the generation of a proton gradient across the mitochondrial membrane that is then used for ATP synthesis. This chain is Cytochrome b (MT-CYB), found in Akodon paranaensis (Parana grass mouse).